The following is a 273-amino-acid chain: Diaminopimelate epimerase (273 aa).

Substrate is bound by residues Asn-11 and Asn-60. The Proton donor role is filled by Cys-69. Substrate-binding positions include 70–71 (GN), Asn-181, and 199–200 (ER). Cys-209 acts as the Proton acceptor in catalysis. 210–211 (GT) contacts substrate.

This sequence belongs to the diaminopimelate epimerase family. In terms of assembly, homodimer.

Its subcellular location is the cytoplasm. The enzyme catalyses (2S,6S)-2,6-diaminopimelate = meso-2,6-diaminopimelate. It participates in amino-acid biosynthesis; L-lysine biosynthesis via DAP pathway; DL-2,6-diaminopimelate from LL-2,6-diaminopimelate: step 1/1. Its function is as follows. Catalyzes the stereoinversion of LL-2,6-diaminopimelate (L,L-DAP) to meso-diaminopimelate (meso-DAP), a precursor of L-lysine and an essential component of the bacterial peptidoglycan. The protein is Diaminopimelate epimerase of Helicobacter pylori (strain ATCC 700392 / 26695) (Campylobacter pylori).